The primary structure comprises 329 residues: Biotin synthase (329 aa).

Residues 46–275 enclose the Radical SAM core domain; sequence FFGRRLKLVR…LNPKAELRAS (230 aa). Residues Cys-64, Cys-68, and Cys-71 each coordinate [4Fe-4S] cluster. [2Fe-2S] cluster-binding residues include Cys-108, Cys-140, Cys-200, and Arg-273.

This sequence belongs to the radical SAM superfamily. Biotin synthase family. Homodimer. Requires [4Fe-4S] cluster as cofactor. [2Fe-2S] cluster serves as cofactor.

It carries out the reaction (4R,5S)-dethiobiotin + (sulfur carrier)-SH + 2 reduced [2Fe-2S]-[ferredoxin] + 2 S-adenosyl-L-methionine = (sulfur carrier)-H + biotin + 2 5'-deoxyadenosine + 2 L-methionine + 2 oxidized [2Fe-2S]-[ferredoxin]. It participates in cofactor biosynthesis; biotin biosynthesis; biotin from 7,8-diaminononanoate: step 2/2. In terms of biological role, catalyzes the conversion of dethiobiotin (DTB) to biotin by the insertion of a sulfur atom into dethiobiotin via a radical-based mechanism. The polypeptide is Biotin synthase (Thermus thermophilus (strain ATCC 27634 / DSM 579 / HB8)).